Consider the following 500-residue polypeptide: Glycerol kinase (500 aa).

Thr11 serves as a coordination point for ADP. Positions 11, 12, and 13 each coordinate ATP. Residue Thr11 participates in sn-glycerol 3-phosphate binding. Arg15 is a binding site for ADP. Sn-glycerol 3-phosphate is bound by residues Arg81, Glu82, Tyr133, and Asp242. Glycerol is bound by residues Arg81, Glu82, Tyr133, Asp242, and Gln243. ADP is bound by residues Thr264 and Gly307. Residues Thr264, Gly307, Gln311, and Gly411 each coordinate ATP. Gly411 is a binding site for ADP.

The protein belongs to the FGGY kinase family.

The catalysed reaction is glycerol + ATP = sn-glycerol 3-phosphate + ADP + H(+). It participates in polyol metabolism; glycerol degradation via glycerol kinase pathway; sn-glycerol 3-phosphate from glycerol: step 1/1. Its activity is regulated as follows. Inhibited by fructose 1,6-bisphosphate (FBP). Its function is as follows. Key enzyme in the regulation of glycerol uptake and metabolism. Catalyzes the phosphorylation of glycerol to yield sn-glycerol 3-phosphate. In Bradyrhizobium sp. (strain ORS 278), this protein is Glycerol kinase.